We begin with the raw amino-acid sequence, 414 residues long: 3-oxo-isoapionate-4-phosphate transcarboxylase/hydrolase (414 aa).

The Mg(2+) site is built by Lys180, Asp182, and Glu183. Lys180 carries the N6-carboxylysine modification.

It belongs to the RuBisCO large chain family. It depends on Mg(2+) as a cofactor.

The enzyme catalyses 3-oxoisoapionate 4-phosphate + H2O = (2R)-3-phosphoglycerate + glycolate + H(+). It participates in carbohydrate metabolism. In terms of biological role, involved in catabolism of D-apiose. Catalyzes the conversion of 3-oxo-isoapionate 4-phosphate to 3-phosphoglycerate and glycolate. The sequence is that of 3-oxo-isoapionate-4-phosphate transcarboxylase/hydrolase from Xanthobacter autotrophicus (strain ATCC BAA-1158 / Py2).